The chain runs to 667 residues: Trifunctional UDP-glucose 4,6-dehydratase/UDP-4-keto-6-deoxy-D-glucose 3,5-epimerase/UDP-4-keto-L-rhamnose-reductase RHM2 (667 aa).

15-21 (GAAGFIA) is a binding site for NAD(+). Residue Thr-134 participates in substrate binding. The Proton donor role is filled by Asp-135. Residues Glu-136 and Tyr-161 each act as proton acceptor in the active site. Residue 389-395 (GKTGWLG) participates in NADP(+) binding.

In the N-terminal section; belongs to the NAD(P)-dependent epimerase/dehydratase family. dTDP-glucose dehydratase subfamily. This sequence in the C-terminal section; belongs to the dTDP-4-dehydrorhamnose reductase family. The cofactor is NAD(+). NADP(+) is required as a cofactor. In terms of tissue distribution, expressed in roots, stems, leaves, seedlings, inflorescence tips, and siliques.

The enzyme catalyses UDP-alpha-D-glucose = UDP-4-dehydro-6-deoxy-alpha-D-glucose + H2O. It participates in carbohydrate biosynthesis. Functionally, trifunctional enzyme involved in UDP-beta-L-rhamnose biosynthesis, a precursor of the primary cell wall components rhamnogalacturonan I (RG-I) and rhamnogalacturonan II (RG-II). Catalyzes the dehydration of UDP-glucose to form UDP-4-dehydro-6-deoxy-D-glucose followed by the epimerization of the C3' and C5' positions of UDP-4-dehydro-6-deoxy-D-glucose to form UDP-4-keto-beta-L-rhamnose and the reduction of UDP-4-keto-beta-L-rhamnose to yield UDP-beta-L-rhamnose. Required for the normal seed coat epidermal development. In Arabidopsis thaliana (Mouse-ear cress), this protein is Trifunctional UDP-glucose 4,6-dehydratase/UDP-4-keto-6-deoxy-D-glucose 3,5-epimerase/UDP-4-keto-L-rhamnose-reductase RHM2.